The following is a 327-amino-acid chain: Phenylalanine--tRNA ligase alpha subunit (327 aa).

E252 serves as a coordination point for Mg(2+).

It belongs to the class-II aminoacyl-tRNA synthetase family. Phe-tRNA synthetase alpha subunit type 1 subfamily. In terms of assembly, tetramer of two alpha and two beta subunits. Requires Mg(2+) as cofactor.

Its subcellular location is the cytoplasm. The enzyme catalyses tRNA(Phe) + L-phenylalanine + ATP = L-phenylalanyl-tRNA(Phe) + AMP + diphosphate + H(+). This is Phenylalanine--tRNA ligase alpha subunit from Yersinia enterocolitica serotype O:8 / biotype 1B (strain NCTC 13174 / 8081).